Consider the following 165-residue polypeptide: Regulator of ribonuclease activity A (165 aa).

Belongs to the RraA family. As to quaternary structure, homotrimer. Binds to both RNA-binding sites in the C-terminal region of Rne and to RhlB.

Its subcellular location is the cytoplasm. Its function is as follows. Globally modulates RNA abundance by binding to RNase E (Rne) and regulating its endonucleolytic activity. Can modulate Rne action in a substrate-dependent manner by altering the composition of the degradosome. Modulates RNA-binding and helicase activities of the degradosome. The protein is Regulator of ribonuclease activity A of Pseudoalteromonas translucida (strain TAC 125).